A 248-amino-acid polypeptide reads, in one-letter code: tRNA (guanine-N(1)-)-methyltransferase (248 aa).

S-adenosyl-L-methionine contacts are provided by residues G113 and 133–138; that span reads IGDYVL.

This sequence belongs to the RNA methyltransferase TrmD family. Homodimer.

The protein resides in the cytoplasm. The catalysed reaction is guanosine(37) in tRNA + S-adenosyl-L-methionine = N(1)-methylguanosine(37) in tRNA + S-adenosyl-L-homocysteine + H(+). Functionally, specifically methylates guanosine-37 in various tRNAs. The polypeptide is tRNA (guanine-N(1)-)-methyltransferase (Shewanella woodyi (strain ATCC 51908 / MS32)).